The following is a 961-amino-acid chain: Probable exosome complex exonuclease RRP44 (961 aa).

The region spanning 73–188 is the PINc domain; it reads HALIVDSTSL…LVFDEDSKKR (116 aa). The CSD1 domain occupies 232–338; that stretch reads IFDEYLSHDR…DEENDDENDE (107 aa). A disordered region spans residues 322–346; sequence ADDMGNEDEENDDENDEPKAKKSKK. The span at 325–337 shows a compositional bias: acidic residues; it reads MGNEDEENDDEND. A CSD2 domain is found at 381 to 447; that stretch reads LFCPAERLIP…ENEVLLLEHD (67 aa). In terms of domain architecture, RNB spans 479–809; sequence RVDLRDLTIC…IVHRLLAAAI (331 aa).

This sequence belongs to the RNR ribonuclease family. As to quaternary structure, component of the RNA exosome complex. As to expression, ubiquitously expressed.

The protein resides in the nucleus. Its subcellular location is the nucleoplasm. Putative catalytic component of the RNA exosome complex which has 3'-&gt;5' exoribonuclease activity and participates in a multitude of cellular RNA processing and degradation events. Has both 3'-5' exonuclease and endonuclease activities. Involved in regulation of antisense ribosomal siRNA production. The sequence is that of Probable exosome complex exonuclease RRP44 (dis-3) from Caenorhabditis elegans.